We begin with the raw amino-acid sequence, 448 residues long: Selenide, water dikinase 2 (448 aa).

Residue alanine 2 is modified to N-acetylalanine. A Phosphoserine modification is found at serine 46. Selenocysteine 60 is an active-site residue. Residue selenocysteine 60 is a non-standard amino acid, selenocysteine. Lysine 63 contributes to the ATP binding site. A disordered region spans residues 85 to 107; the sequence is LGRGLVGGQEEASQEAGLPAGAG. The residue at position 97 (serine 97) is a Phosphoserine. ATP contacts are provided by residues 118–120, aspartate 138, aspartate 161, and 212–215; these read GMD and GGQT. Aspartate 120 serves as a coordination point for Mg(2+). Residue aspartate 161 coordinates Mg(2+). Aspartate 316 contacts Mg(2+).

This sequence belongs to the selenophosphate synthase 1 family. Class I subfamily. Homodimer. The cofactor is Mg(2+). Post-translationally, truncated SEPHS2 proteins produced by failed UGA/Sec decoding are ubiquitinated by the CRL2(KLHDC3) complex, which recognizes the glycine (Gly) at the C-terminus of truncated SEPHS2 proteins.

It carries out the reaction hydrogenselenide + ATP + H2O = selenophosphate + AMP + phosphate + 2 H(+). Functionally, synthesizes selenophosphate from selenide and ATP. This is Selenide, water dikinase 2 (SEPHS2) from Homo sapiens (Human).